The sequence spans 127 residues: Large ribosomal subunit protein bL17 (127 aa).

Belongs to the bacterial ribosomal protein bL17 family. As to quaternary structure, part of the 50S ribosomal subunit. Contacts protein L32.

The sequence is that of Large ribosomal subunit protein bL17 from Lactobacillus helveticus (strain DPC 4571).